Consider the following 134-residue polypeptide: ATP synthase epsilon chain, chloroplastic (134 aa).

It belongs to the ATPase epsilon chain family. F-type ATPases have 2 components, CF(1) - the catalytic core - and CF(0) - the membrane proton channel. CF(1) has five subunits: alpha(3), beta(3), gamma(1), delta(1), epsilon(1). CF(0) has three main subunits: a, b and c.

The protein localises to the plastid. The protein resides in the chloroplast thylakoid membrane. Functionally, produces ATP from ADP in the presence of a proton gradient across the membrane. This Pelargonium hortorum (Common geranium) protein is ATP synthase epsilon chain, chloroplastic.